The sequence spans 691 residues: Elongation factor G (691 aa).

The region spanning 8-282 (ERVRNIGIAA…AVVDYLPAPV (275 aa)) is the tr-type G domain. GTP is bound by residues 17–24 (AHIDAGKT), 81–85 (DTPGH), and 135–138 (NKMD).

This sequence belongs to the TRAFAC class translation factor GTPase superfamily. Classic translation factor GTPase family. EF-G/EF-2 subfamily.

Its subcellular location is the cytoplasm. Catalyzes the GTP-dependent ribosomal translocation step during translation elongation. During this step, the ribosome changes from the pre-translocational (PRE) to the post-translocational (POST) state as the newly formed A-site-bound peptidyl-tRNA and P-site-bound deacylated tRNA move to the P and E sites, respectively. Catalyzes the coordinated movement of the two tRNA molecules, the mRNA and conformational changes in the ribosome. This chain is Elongation factor G, found in Prochlorococcus marinus (strain MIT 9303).